Here is a 7311-residue protein sequence, read N- to C-terminus: MAM and LDL-receptor class A domain-containing protein 2 (7311 aa).

MAM domains follow at residues Ala4–Thr171, Leu199–Pro361, Lys363–Pro530, Gly532–Val695, Tyr727–Val887, Met889–Leu1050, Gly1052–Leu1220, Phe1228–Ser1392, Gly1394–Ala1557, Gly1559–Gln1722, Asn1755–Ser1918, Thr1920–Leu2087, Gly2089–Val2254, Asn2274–Pro2437, Thr2439–Pro2601, and Gly2603–Gly2771. The segment at Trp2461 to Thr2481 is disordered. Low complexity predominate over residues Gly2466–Pro2475. 2 P-type domains span residues Gly2771–Pro2817 and Ser2818–Pro2862. 6 disulfides stabilise this stretch: Cys2773–Cys2802, Cys2784–Cys2801, Cys2795–Cys2813, Cys2820–Cys2847, Cys2831–Cys2846, and Cys2841–Cys2858. 4 consecutive MAM domains span residues Trp2883–Pro3048, Arg3050–Pro3214, Gly3216–Ser3384, and Gly3429–Leu3587. An LDL-receptor class A 1 domain is found at Ser3593 to Tyr3628. 3 cysteine pairs are disulfide-bonded: Cys3594-Cys3605, Cys3600-Cys3618, and Cys3612-Cys3627. The MAM 21 domain occupies Tyr3632–Ser3794. LDL-receptor class A domains follow at residues Pro3814 to Gly3850 and Ser4016 to Ala4054. Disulfide bonds link Cys3815/Cys3827, Cys3822/Cys3840, and Cys3834/Cys3849. The MAM 22 domain maps to Gly3850–Leu4011. Disulfide bonds link Cys4017-Cys4029, Cys4024-Cys4042, and Cys4036-Cys4053. Residues Glu4058–Pro4221 form the MAM 23 domain. Residues Gly4239–Pro4276 form the LDL-receptor class A 4 domain. 3 disulfide bridges follow: Cys4240-Cys4253, Cys4247-Cys4266, and Cys4260-Cys4275. Positions Ala4277–Glu4438 constitute an MAM 24 domain. Residues Thr4444–Ala4483 enclose the LDL-receptor class A 5 domain. Intrachain disulfides connect Cys4445-Cys4458, Cys4453-Cys4471, and Cys4465-Cys4482. Residues Asn4486–Val4646 form the MAM 25 domain. 2 LDL-receptor class A domains span residues Pro4660–Gly4699 and Tyr4859–Ser4899. Intrachain disulfides connect Cys4668-Cys4687, Cys4681-Cys4698, Cys4860-Cys4876, Cys4871-Cys4889, and Cys4883-Cys4898. In terms of domain architecture, MAM 26 spans Trp4700–Gly4862. The 161-residue stretch at Ser4903–Gln5063 folds into the MAM 27 domain. Residues Asn5085–Pro5122 enclose the LDL-receptor class A 8 domain. Intrachain disulfides connect Cys5086–Cys5099, Cys5093–Cys5112, and Cys5106–Cys5121. In terms of domain architecture, MAM 28 spans His5123–Leu5281. In terms of domain architecture, LDL-receptor class A 9 spans Ser5287–Gly5322. 3 disulfides stabilise this stretch: Cys5288-Cys5299, Cys5294-Cys5312, and Cys5306-Cys5321. In terms of domain architecture, MAM 29 spans Thr5326–Gln5489. Positions Gln5513–Ala5552 constitute an LDL-receptor class A 10 domain. 3 disulfides stabilise this stretch: Cys5514–Cys5529, Cys5521–Cys5542, and Cys5536–Cys5551. One can recognise an MAM 30 domain in the interval Thr5554–Pro5719. The region spanning Lys5725–Ser5763 is the LDL-receptor class A 11 domain. Cystine bridges form between Cys5726/Cys5738, Cys5733/Cys5751, and Cys5745/Cys5762. In terms of domain architecture, MAM 31 spans Gly5768 to Asp5935. An LDL-receptor class A 12 domain is found at Pro5957–Gly5993. 3 cysteine pairs are disulfide-bonded: Cys5958-Cys5970, Cys5965-Cys5983, and Cys5977-Cys5992. The region spanning Ser5994 to Val6156 is the MAM 32 domain. The disordered stretch occupies residues Asn6014–Asp6034. Positions Lys6023–Asp6034 are enriched in polar residues. The 40-residue stretch at Thr6161 to Ser6200 folds into the LDL-receptor class A 13 domain. 3 disulfide bridges follow: Cys6162-Cys6175, Cys6169-Cys6188, and Cys6182-Cys6199. The region spanning Ala6204–Lys6365 is the MAM 33 domain. An LDL-receptor class A 14 domain is found at Arg6377 to Pro6414. 3 cysteine pairs are disulfide-bonded: Cys6378–Cys6391, Cys6385–Cys6404, and Cys6398–Cys6413. 4 consecutive MAM domains span residues Ala6430–Lys6590, Leu6606–Phe6779, Gly6808–Phe6965, and Gly7173–Leu7311.

Component of the acid-insoluble and acid-soluble organic matrix of the aragonitic skeleton (at protein level).

The protein resides in the secreted. The protein is MAM and LDL-receptor class A domain-containing protein 2 of Acropora millepora (Staghorn coral).